Here is an 876-residue protein sequence, read N- to C-terminus: GRB2-associated and regulator of MAPK protein (876 aa).

The CABIT stretch occupies residues 9–318 (KDVKWSSASF…NLIKGEVWQD (310 aa)). Y451 is subject to Phosphotyrosine. 2 disordered regions span residues 460-569 (SVKR…TLSY) and 708-741 (DRML…LSEP). Residues 461–471 (VKRSGQPLTRS) show a composition bias toward polar residues. Over residues 532-549 (PPVPPRSSKPSSPTPSVP) the composition is skewed to pro residues. Over residues 556 to 569 (VRQQTRSPSPTLSY) the composition is skewed to polar residues. Positions 811 to 876 (LSVEEVSKSL…QFINGWRPKM (66 aa)) constitute an SAM domain.

It belongs to the GAREM family.

Its function is as follows. Adapter protein that may provide a link between cell surface epidermal growth factor receptor and the MAPK/ERK signaling pathway. May promote cell proliferation. The polypeptide is GRB2-associated and regulator of MAPK protein (garem1) (Xenopus laevis (African clawed frog)).